The chain runs to 262 residues: Type II restriction enzyme HinfI (262 aa).

The enzyme catalyses Endonucleolytic cleavage of DNA to give specific double-stranded fragments with terminal 5'-phosphates.. A P subtype restriction enzyme that recognizes the double-stranded sequence 5'-GANTC-3' and cleaves after G-1. This Haemophilus influenzae protein is Type II restriction enzyme HinfI (hinfIR).